A 98-amino-acid polypeptide reads, in one-letter code: Large ribosomal subunit protein mL53 (98 aa).

This sequence belongs to the mitochondrion-specific ribosomal protein mL53 family. In terms of assembly, component of the mitochondrial large ribosomal subunit (mt-LSU). Mature yeast 74S mitochondrial ribosomes consist of a small (37S) and a large (54S) subunit. The 37S small subunit contains a 15S ribosomal RNA (15S mt-rRNA) and 34 different proteins. The 54S large subunit contains a 21S rRNA (21S mt-rRNA) and 46 different proteins.

The protein resides in the mitochondrion. Component of the mitochondrial ribosome (mitoribosome), a dedicated translation machinery responsible for the synthesis of mitochondrial genome-encoded proteins, including at least some of the essential transmembrane subunits of the mitochondrial respiratory chain. The mitoribosomes are attached to the mitochondrial inner membrane and translation products are cotranslationally integrated into the membrane. The protein is Large ribosomal subunit protein mL53 (MRPL44) of Saccharomyces cerevisiae (strain ATCC 204508 / S288c) (Baker's yeast).